We begin with the raw amino-acid sequence, 151 residues long: MIPTTILISAALLSSALAGPWANICASKSSNEIRTCDSYGCGQYSAQRTQRHHPGVDVLCSDGSVVYAPFTGKIVGQEKPYRNKNAINDGIRLSGRGFCVKIFYIKPIKYKGSIKKGEKLGTLLPLQKIYPGIQSHVHVENCDSSDPTAYL.

The signal sequence occupies residues 1 to 18 (MIPTTILISAALLSSALA). 3 cysteine pairs are disulfide-bonded: cysteine 25–cysteine 60, cysteine 36–cysteine 41, and cysteine 99–cysteine 142. Residues histidine 53, aspartate 57, and histidine 138 each contribute to the Zn(2+) site.

It belongs to the LECT2/MIM-1 family. As to expression, highly expressed in liver and weakly in testis. Not expressed in heart, brain, spleen, lung, skeletal muscle and kidney.

It localises to the secreted. Has a neutrophil chemotactic activity. Also a positive regulator of chondrocyte proliferation. This Mus musculus (Mouse) protein is Leukocyte cell-derived chemotaxin-2 (Lect2).